The following is a 192-amino-acid chain: E3 ubiquitin-protein ligase RNF185 (192 aa).

Positions 1 to 27 are enriched in low complexity; the sequence is MASKGPSASASPENSSAGGPSGSSNGA. Residues 1–30 form a disordered region; that stretch reads MASKGPSASASPENSSAGGPSGSSNGAGES. Over 1–130 the chain is Cytoplasmic; sequence MASKGPSASA…GGFQGFGFGD (130 aa). Residues 29-80 are required for ubiquitin ligase activity and protection against ER stress-induced cell death; the sequence is ESGGQDSTFECNICLDTAKDAVISLCGHLFCWPCLHQWLETRPNRQVCPVCK. An RING-type zinc finger spans residues 39–80; sequence CNICLDTAKDAVISLCGHLFCWPCLHQWLETRPNRQVCPVCK. The tract at residues 90-123 is disordered; it reads PLYGRGSTGQQDPREKTPPRPQGQRPEPENRGGF. A helical transmembrane segment spans residues 131 to 151; the sequence is GGFQMSFGIGAFPFGIFATAF. The Mitochondrial intermembrane segment spans residues 152–171; sequence NINDGRPPPAVPGTPQYVDE. Residues 172–192 traverse the membrane as a helical segment; sequence QFLSRLFLFVALVIMFWLLIA.

In terms of assembly, interacts with ATG5 and BNIP1. As to expression, ubiquitously expressed.

It is found in the mitochondrion outer membrane. Its subcellular location is the endoplasmic reticulum membrane. The catalysed reaction is S-ubiquitinyl-[E2 ubiquitin-conjugating enzyme]-L-cysteine + [acceptor protein]-L-lysine = [E2 ubiquitin-conjugating enzyme]-L-cysteine + N(6)-ubiquitinyl-[acceptor protein]-L-lysine.. It participates in protein modification; protein ubiquitination. E3 ubiquitin-protein ligase that regulates selective mitochondrial autophagy by mediating 'Lys-63'-linked polyubiquitination of BNIP1. Acts in the endoplasmic reticulum (ER)-associated degradation (ERAD) pathway, which targets misfolded proteins that accumulate in the endoplasmic reticulum (ER) for ubiquitination and subsequent proteasome-mediated degradation. Protects cells from ER stress-induced apoptosis. Responsible for the cotranslational ubiquitination and degradation of CFTR in the ERAD pathway. Also acts as a regulator of the innate antiviral response by catalyzing 'Lys-27'-linked polyubiquitination of CGAS at 'Lys-173' and 'Lys-384', thereby promoting CGAS cyclic GMP-AMP synthase activity. Preferentially associates with the E2 enzymes UBE2J1 and UBE2J2. The sequence is that of E3 ubiquitin-protein ligase RNF185 from Homo sapiens (Human).